Reading from the N-terminus, the 200-residue chain is Holliday junction branch migration complex subunit RuvA (200 aa).

A domain I region spans residues 1 to 64 (MFTYFRGELI…EDLMQLFGFL (64 aa)). The interval 65-143 (EEEERQLFRL…KLRPSGGTKS (79 aa)) is domain II. Residues 144–148 (VSRLS) are flexible linker. The interval 148–200 (SESSMRDDAVNALVTLGFLRSVAQKAVTESLTSLRNPQVEDLVRDALLTIRTP) is domain III.

This sequence belongs to the RuvA family. As to quaternary structure, homotetramer. Forms an RuvA(8)-RuvB(12)-Holliday junction (HJ) complex. HJ DNA is sandwiched between 2 RuvA tetramers; dsDNA enters through RuvA and exits via RuvB. An RuvB hexamer assembles on each DNA strand where it exits the tetramer. Each RuvB hexamer is contacted by two RuvA subunits (via domain III) on 2 adjacent RuvB subunits; this complex drives branch migration. In the full resolvosome a probable DNA-RuvA(4)-RuvB(12)-RuvC(2) complex forms which resolves the HJ.

The protein resides in the cytoplasm. Functionally, the RuvA-RuvB-RuvC complex processes Holliday junction (HJ) DNA during genetic recombination and DNA repair, while the RuvA-RuvB complex plays an important role in the rescue of blocked DNA replication forks via replication fork reversal (RFR). RuvA specifically binds to HJ cruciform DNA, conferring on it an open structure. The RuvB hexamer acts as an ATP-dependent pump, pulling dsDNA into and through the RuvAB complex. HJ branch migration allows RuvC to scan DNA until it finds its consensus sequence, where it cleaves and resolves the cruciform DNA. This Chlorobium phaeobacteroides (strain BS1) protein is Holliday junction branch migration complex subunit RuvA.